Reading from the N-terminus, the 594-residue chain is Elongation factor 4 (594 aa).

In terms of domain architecture, tr-type G spans Lys-2–Glu-184. GTP contacts are provided by residues Asp-14–Thr-19 and Asn-131–Asp-134.

This sequence belongs to the TRAFAC class translation factor GTPase superfamily. Classic translation factor GTPase family. LepA subfamily.

It is found in the cell inner membrane. The catalysed reaction is GTP + H2O = GDP + phosphate + H(+). Required for accurate and efficient protein synthesis under certain stress conditions. May act as a fidelity factor of the translation reaction, by catalyzing a one-codon backward translocation of tRNAs on improperly translocated ribosomes. Back-translocation proceeds from a post-translocation (POST) complex to a pre-translocation (PRE) complex, thus giving elongation factor G a second chance to translocate the tRNAs correctly. Binds to ribosomes in a GTP-dependent manner. This is Elongation factor 4 from Francisella philomiragia subsp. philomiragia (strain ATCC 25017 / CCUG 19701 / FSC 153 / O#319-036).